The sequence spans 131 residues: ER membrane protein complex subunit 5 (131 aa).

At 1 to 3 the chain is on the cytoplasmic side; sequence MAP. Residues 4-22 form a helical membrane-spanning segment; that stretch reads SLWKGLVGIGLFALAHAAL. Residues 23–43 are Lumenal-facing; sequence SAAQHRSYMRLTEKEDESLPI. The chain crosses the membrane as a helical span at residues 44-63; it reads DIVLQTLLAFAVTCYGIVHI. The Cytoplasmic portion of the chain corresponds to 64–131; it reads AGEFKDMDAT…KLRKLESLRR (68 aa). Ser-120 is subject to Phosphoserine.

The protein belongs to the membrane magnesium transporter (TC 1.A.67) family. Component of the ER membrane protein complex (EMC).

It localises to the endoplasmic reticulum membrane. The protein localises to the golgi apparatus membrane. It is found in the early endosome membrane. Its function is as follows. Part of the endoplasmic reticulum membrane protein complex (EMC) that enables the energy-independent insertion into endoplasmic reticulum membranes of newly synthesized membrane proteins. Preferentially accommodates proteins with transmembrane domains that are weakly hydrophobic or contain destabilizing features such as charged and aromatic residues. Involved in the cotranslational insertion of multi-pass membrane proteins in which stop-transfer membrane-anchor sequences become ER membrane spanning helices. It is also required for the post-translational insertion of tail-anchored/TA proteins in endoplasmic reticulum membranes. By mediating the proper cotranslational insertion of N-terminal transmembrane domains in an N-exo topology, with translocated N-terminus in the lumen of the ER, controls the topology of multi-pass membrane proteins like the G protein-coupled receptors. By regulating the insertion of various proteins in membranes, it is indirectly involved in many cellular processes. May be involved in Mg(2+) transport. This Pongo abelii (Sumatran orangutan) protein is ER membrane protein complex subunit 5.